Consider the following 141-residue polypeptide: Large ribosomal subunit protein uL11A (141 aa).

The protein belongs to the universal ribosomal protein uL11 family. Part of the ribosomal stalk of the 50S ribosomal subunit. Interacts with L10 and the large rRNA to form the base of the stalk. L10 forms an elongated spine to which L12 dimers bind in a sequential fashion forming a multimeric L10(L12)X complex. Post-translationally, one or more lysine residues are methylated.

In terms of biological role, forms part of the ribosomal stalk which helps the ribosome interact with GTP-bound translation factors. The polypeptide is Large ribosomal subunit protein uL11A (Bacillus cereus (strain ATCC 14579 / DSM 31 / CCUG 7414 / JCM 2152 / NBRC 15305 / NCIMB 9373 / NCTC 2599 / NRRL B-3711)).